A 174-amino-acid chain; its full sequence is Co-chaperone protein HscB homolog (174 aa).

Positions 2-74 (NYFELFSFTP…ILRAEHMLSL (73 aa)) constitute a J domain.

It belongs to the HscB family. As to quaternary structure, interacts with HscA and stimulates its ATPase activity.

In terms of biological role, co-chaperone involved in the maturation of iron-sulfur cluster-containing proteins. Seems to help targeting proteins to be folded toward HscA. In Shewanella woodyi (strain ATCC 51908 / MS32), this protein is Co-chaperone protein HscB homolog.